We begin with the raw amino-acid sequence, 450 residues long: UDP-N-acetylmuramoylalanine--D-glutamate ligase (450 aa).

119–125 (GSNGKTT) is an ATP binding site.

This sequence belongs to the MurCDEF family.

Its subcellular location is the cytoplasm. The enzyme catalyses UDP-N-acetyl-alpha-D-muramoyl-L-alanine + D-glutamate + ATP = UDP-N-acetyl-alpha-D-muramoyl-L-alanyl-D-glutamate + ADP + phosphate + H(+). It functions in the pathway cell wall biogenesis; peptidoglycan biosynthesis. Its function is as follows. Cell wall formation. Catalyzes the addition of glutamate to the nucleotide precursor UDP-N-acetylmuramoyl-L-alanine (UMA). The sequence is that of UDP-N-acetylmuramoylalanine--D-glutamate ligase from Streptococcus thermophilus (strain CNRZ 1066).